Reading from the N-terminus, the 248-residue chain is 3-deoxy-manno-octulosonate cytidylyltransferase (248 aa).

Belongs to the KdsB family.

The protein resides in the cytoplasm. It catalyses the reaction 3-deoxy-alpha-D-manno-oct-2-ulosonate + CTP = CMP-3-deoxy-beta-D-manno-octulosonate + diphosphate. Its pathway is nucleotide-sugar biosynthesis; CMP-3-deoxy-D-manno-octulosonate biosynthesis; CMP-3-deoxy-D-manno-octulosonate from 3-deoxy-D-manno-octulosonate and CTP: step 1/1. It functions in the pathway bacterial outer membrane biogenesis; lipopolysaccharide biosynthesis. In terms of biological role, activates KDO (a required 8-carbon sugar) for incorporation into bacterial lipopolysaccharide in Gram-negative bacteria. The chain is 3-deoxy-manno-octulosonate cytidylyltransferase from Salmonella dublin (strain CT_02021853).